Consider the following 255-residue polypeptide: Hydroxyacylglutathione hydrolase (255 aa).

Zn(2+) is bound by residues His52, His54, Asp56, His57, His109, Asp126, and His166.

The protein belongs to the metallo-beta-lactamase superfamily. Glyoxalase II family. In terms of assembly, monomer. Zn(2+) serves as cofactor.

The catalysed reaction is an S-(2-hydroxyacyl)glutathione + H2O = a 2-hydroxy carboxylate + glutathione + H(+). The protein operates within secondary metabolite metabolism; methylglyoxal degradation; (R)-lactate from methylglyoxal: step 2/2. In terms of biological role, thiolesterase that catalyzes the hydrolysis of S-D-lactoyl-glutathione to form glutathione and D-lactic acid. The sequence is that of Hydroxyacylglutathione hydrolase from Anaeromyxobacter dehalogenans (strain 2CP-C).